The chain runs to 84 residues: MYB-like transcription factor TCL1 (84 aa).

One can recognise a Myb-like domain in the interval 36–73; sequence TEQEEDLIFRMYRLVGDRWDLIARRVVGREAKEIERYW.

As to expression, expressed in inflorescences and trichomes of rosette and cauline leaves.

Its subcellular location is the nucleus. Functionally, MYB-type transcription factor involved in trichome cell specification. Acts as a negative regulator of trichome patterning and formation by direct binding to the cis-acting regulatory elements of GL1, thus suppressing the expression of GL1. In Arabidopsis thaliana (Mouse-ear cress), this protein is MYB-like transcription factor TCL1 (TCL1).